Here is a 594-residue protein sequence, read N- to C-terminus: A-type ATP synthase subunit A (594 aa).

Residue 236–243 coordinates ATP; sequence GPFGSGKT.

Belongs to the ATPase alpha/beta chains family. As to quaternary structure, has multiple subunits with at least A(3), B(3), C, D, E, F, H, I and proteolipid K(x).

The protein localises to the cell membrane. The catalysed reaction is ATP + H2O + 4 H(+)(in) = ADP + phosphate + 5 H(+)(out). Functionally, component of the A-type ATP synthase that produces ATP from ADP in the presence of a proton gradient across the membrane. The A chain is the catalytic subunit. This is A-type ATP synthase subunit A from Pyrobaculum neutrophilum (strain DSM 2338 / JCM 9278 / NBRC 100436 / V24Sta) (Thermoproteus neutrophilus).